A 618-amino-acid polypeptide reads, in one-letter code: Citrolysin protein 1 (618 aa).

Its function is as follows. Bacterial hemolysins are exotoxins that attack blood cell membranes and cause cell rupture by mechanisms not clearly defined. In Citrobacter freundii, this protein is Citrolysin protein 1.